Consider the following 449-residue polypeptide: Phosphoglucosamine mutase (449 aa).

Serine 100 functions as the Phosphoserine intermediate in the catalytic mechanism. Positions 100, 241, 243, and 245 each coordinate Mg(2+). The residue at position 100 (serine 100) is a Phosphoserine.

This sequence belongs to the phosphohexose mutase family. Mg(2+) is required as a cofactor. Activated by phosphorylation.

The catalysed reaction is alpha-D-glucosamine 1-phosphate = D-glucosamine 6-phosphate. Its function is as follows. Catalyzes the conversion of glucosamine-6-phosphate to glucosamine-1-phosphate. This chain is Phosphoglucosamine mutase, found in Clostridium botulinum (strain Langeland / NCTC 10281 / Type F).